Consider the following 528-residue polypeptide: Sulfhydryl oxidase 1 (528 aa).

The signal sequence occupies residues 1 to 19 (MSLIHLFLLLGLLSLEAAA). The Thioredoxin domain occupies 35–170 (NVADQKDNAI…LLNWINKQIG (136 aa)). An N-linked (GlcNAc...) asparagine glycan is attached at N47. Residues C72 and C75 each act as nucleophile in the active site. C72 and C75 are joined by a disulfide. N-linked (GlcNAc...) asparagine glycans are attached at residues N186 and N297. An intrachain disulfide couples C292 to C304. Residues 295–397 (SKNETRGFSC…GDPKFPKMIW (103 aa)) enclose the ERV/ALR sulfhydryl oxidase domain. FAD-binding positions include R300, W307, H311, D341, H345, 368 to 375 (WSTHNKVN), K394, and W397. Cysteines 339 and 342 form a disulfide. A disulfide bridge links C403 with C406.

FAD is required as a cofactor. In terms of tissue distribution, highly expressed in roots.

It is found in the secreted. The protein resides in the cell wall. The catalysed reaction is 2 R'C(R)SH + O2 = R'C(R)S-S(R)CR' + H2O2. In terms of biological role, sulfhydryl oxidase involved in the regulation of cation homeostasis. Positively regulates shoot accumulation of K(+) and inhibits accumulation of toxic cations. Acts at the level of root K(+) efflux systems involved in xylem loading (root symplast-xylem interface). This is Sulfhydryl oxidase 1 (QSOX1) from Arabidopsis thaliana (Mouse-ear cress).